Here is a 246-residue protein sequence, read N- to C-terminus: Phosphomannomutase (246 aa).

The Nucleophile role is filled by Asp13. Residues Asp13 and Asp15 each contribute to the Mg(2+) site. Asp15 serves as the catalytic Proton donor/acceptor. 6 residues coordinate alpha-D-mannose 1-phosphate: Arg22, Arg124, Arg135, Arg142, Ser180, and Asp182. Residues Asp208, Tyr220, and Thr225 each contribute to the Mg(2+) site.

Belongs to the eukaryotic PMM family. As to quaternary structure, homodimer. Requires Mg(2+) as cofactor. Expressed in roots, stems, leaves, flowers and immature fruits.

It localises to the cytoplasm. The enzyme catalyses alpha-D-mannose 1-phosphate = D-mannose 6-phosphate. It functions in the pathway nucleotide-sugar biosynthesis; GDP-alpha-D-mannose biosynthesis; alpha-D-mannose 1-phosphate from D-fructose 6-phosphate: step 2/2. Functionally, catalyzes the interconversion of mannose-6-phosphate to mannose-1-phosphate, the precursor for the synthesis of GDP-mannose. GDP-mannose is an essential sugar nucleotide for the synthesis of D-mannose-containing cell wall polysaccharides (galactomannans and glucomannans), glycolipids, glycoproteins and the antioxidant L-ascorbate. Can complement the yeast temperature-sensitive mutant sec53-6. The polypeptide is Phosphomannomutase (Arabidopsis thaliana (Mouse-ear cress)).